A 194-amino-acid chain; its full sequence is Erythropoietin (194 aa).

The signal sequence occupies residues 1–27 (MGARDCTPLLLLLLSFLLFPLGLPVLG). 2 cysteine pairs are disulfide-bonded: Cys-34–Cys-189 and Cys-56–Cys-60. Asn-51 is a glycosylation site (N-linked (GlcNAc...) asparagine). 2 N-linked (GlcNAc...) asparagine glycosylation sites follow: Asn-65 and Asn-110.

This sequence belongs to the EPO/TPO family. As to expression, produced by kidney or liver of adult mammals and by liver of fetal or neonatal mammals.

The protein localises to the secreted. Functionally, hormone involved in the regulation of erythrocyte proliferation and differentiation and the maintenance of a physiological level of circulating erythrocyte mass. Binds to EPOR leading to EPOR dimerization and JAK2 activation thereby activating specific downstream effectors, including STAT1 and STAT3. The chain is Erythropoietin (EPO) from Ovis aries (Sheep).